Here is an 888-residue protein sequence, read N- to C-terminus: Alanine--tRNA ligase (888 aa).

4 residues coordinate Zn(2+): H570, H574, C673, and H677.

This sequence belongs to the class-II aminoacyl-tRNA synthetase family. Zn(2+) is required as a cofactor.

It localises to the cytoplasm. The catalysed reaction is tRNA(Ala) + L-alanine + ATP = L-alanyl-tRNA(Ala) + AMP + diphosphate. Catalyzes the attachment of alanine to tRNA(Ala) in a two-step reaction: alanine is first activated by ATP to form Ala-AMP and then transferred to the acceptor end of tRNA(Ala). Also edits incorrectly charged Ser-tRNA(Ala) and Gly-tRNA(Ala) via its editing domain. The sequence is that of Alanine--tRNA ligase from Chlorobium phaeobacteroides (strain DSM 266 / SMG 266 / 2430).